Here is a 261-residue protein sequence, read N- to C-terminus: tRNA (guanine-N(7)-)-methyltransferase (261 aa).

Residues Glu75, Glu100, Asp127, and Asp150 each coordinate S-adenosyl-L-methionine. Asp150 is a catalytic residue. Position 154 (Lys154) interacts with substrate. Residues 156–161 form an interaction with RNA region; it reads RHNKRR. Substrate contacts are provided by residues Asp186 and 223 to 226; that span reads THFE.

Belongs to the class I-like SAM-binding methyltransferase superfamily. TrmB family.

It catalyses the reaction guanosine(46) in tRNA + S-adenosyl-L-methionine = N(7)-methylguanosine(46) in tRNA + S-adenosyl-L-homocysteine. It participates in tRNA modification; N(7)-methylguanine-tRNA biosynthesis. Catalyzes the formation of N(7)-methylguanine at position 46 (m7G46) in tRNA. This is tRNA (guanine-N(7)-)-methyltransferase from Xanthomonas axonopodis pv. citri (strain 306).